Consider the following 290-residue polypeptide: Hsp70 nucleotide exchange factor FES1 (290 aa).

Phosphoserine is present on S12. 6 ARM repeats span residues 13 to 57 (QGDK…NPEV), 76 to 116 (LDNA…TAVQ), 120 to 161 (DSQN…NLIR), 164 to 205 (KDIS…AYLS), 211 to 251 (ENII…HLIS), and 253 to 290 (GIKF…KYVL).

This sequence belongs to the FES1 family. As to quaternary structure, interacts with the Hsp70 chaperones SSA1 and SSB1.

It is found in the cytoplasm. Functionally, involved in protein translation, propagation of [PSI+] prions, and polyamine tolerance. Functions as a nucleotide exchange factor (NEF), which accelerates the release of ADP, for the cytosolic Hsp70 chaperone SSA1 and the ribosome-associated Hsp70 chaperone SSB1. Required for fully efficient Hsp70-mediated folding of proteins. The sequence is that of Hsp70 nucleotide exchange factor FES1 (FES1) from Saccharomyces cerevisiae (strain ATCC 204508 / S288c) (Baker's yeast).